Consider the following 225-residue polypeptide: PKHD-type hydroxylase YbiX (225 aa).

The 100-residue stretch at 78–177 folds into the Fe2OG dioxygenase domain; sequence TLSTPLFNRY…RVASFMWIQS (100 aa). 3 residues coordinate Fe cation: H96, D98, and H158. Residue R168 coordinates 2-oxoglutarate.

Fe(2+) serves as cofactor. The cofactor is L-ascorbate.

This chain is PKHD-type hydroxylase YbiX, found in Escherichia coli O8 (strain IAI1).